Reading from the N-terminus, the 193-residue chain is MEVDLLHFEKKYHNCIVAGIDEAGRGPLAGPVVASAVIVDNANIITGIKDSKKLSKKKRELLYEQITSNYVWATAIISHTEIDDINILEATKKACSIAVANLSLEPEIVLVDGNMQFKDERFVSIINGDNLSLSIAAASIVAKVTRDRLMLDLSAEFPQYLWHKNSGYGTKEHIEAINIHGLSPYHRRSFRCC.

The RNase H type-2 domain maps to 15 to 193 (CIVAGIDEAG…PYHRRSFRCC (179 aa)). D21, E22, and D112 together coordinate a divalent metal cation.

Belongs to the RNase HII family. It depends on Mn(2+) as a cofactor. Mg(2+) serves as cofactor.

It localises to the cytoplasm. It catalyses the reaction Endonucleolytic cleavage to 5'-phosphomonoester.. Functionally, endonuclease that specifically degrades the RNA of RNA-DNA hybrids. The chain is Ribonuclease HII from Rickettsia conorii (strain ATCC VR-613 / Malish 7).